Here is a 338-residue protein sequence, read N- to C-terminus: Large ribosomal subunit protein uL10 (338 aa).

A disordered region spans residues 295 to 338 (EVPTIQPTTPPEKKEEEEKKEEEEEEAETVSEEELAEGLGALFG). Residues 312–330 (EKKEEEEEEAETVSEEELA) are compositionally biased toward acidic residues.

Belongs to the universal ribosomal protein uL10 family. Part of the 50S ribosomal subunit. Forms part of the ribosomal stalk which helps the ribosome interact with GTP-bound translation factors. Forms a heptameric L10(L12)2(L12)2(L12)2 complex, where L10 forms an elongated spine to which the L12 dimers bind in a sequential fashion.

In terms of biological role, forms part of the ribosomal stalk, playing a central role in the interaction of the ribosome with GTP-bound translation factors. This is Large ribosomal subunit protein uL10 from Staphylothermus marinus (strain ATCC 43588 / DSM 3639 / JCM 9404 / F1).